A 666-amino-acid polypeptide reads, in one-letter code: Neurexin-2-beta (666 aa).

The span at 1–10 (MPPGGSGPGG) shows a compositional bias: gly residues. The segment at 1 to 30 (MPPGGSGPGGCPRRPPALAGPLPPPPPPPP) is disordered. An N-terminal signal peptide occupies residues 1–50 (MPPGGSGPGGCPRRPPALAGPLPPPPPPPPPPLLPLLPLLLLLLLGAAEG). Positions 21-30 (PLPPPPPPPP) are enriched in pro residues. Residues 51-590 (ARVSSSLSTT…EVIRESSSTT (540 aa)) are Extracellular-facing. In terms of domain architecture, Laminin G-like spans 91 to 299 (TTYIFGKGGA…HLRLVGEGPS (209 aa)). Asp143 and Val160 together coordinate Ca(2+). The N-linked (GlcNAc...) asparagine glycan is linked to Asn190. Positions 242 and 244 each coordinate Ca(2+). Residues 327 to 346 (ATTTTRRGRSPTLRDSTTQN) are disordered. Ser354 is a glycosylation site (O-linked (Xyl...) (heparan sulfate) serine). 2 disordered regions span residues 412 to 443 (ATQD…CEEP) and 479 to 580 (TLLS…PGAV). Residues 591–611 (GMVVGIVAAAALCILILLYAM) traverse the membrane as a helical segment. The Cytoplasmic segment spans residues 612-666 (YKYRNRDEGSYQVDQSRNYISNSAQSNGAVVKEKAPAAPKTPSKAKKNKDKEYYV). Residues 633–666 (NSAQSNGAVVKEKAPAAPKTPSKAKKNKDKEYYV) form a disordered region.

Belongs to the neurexin family. In terms of assembly, interacts (via cytoplasmic C-terminal region) with CASK. Specific isoforms bind alpha-dystroglycan and neuroligins NLGN1, NLGN2 and NLGN3. Interacts with CBLN1, CBLN2 and, less avidly, with CBLN4. Interacts with CLSTN3. Post-translationally, O-glycosylated; contains heparan sulfate. Heparan sulfate attachment is required for synapse development by mediating interactions with neuroligins.

It localises to the presynaptic cell membrane. Functionally, neuronal cell surface protein that may be involved in cell recognition and cell adhesion. The chain is Neurexin-2-beta (NRXN2) from Homo sapiens (Human).